Here is a 24-residue protein sequence, read N- to C-terminus: Large ribosomal subunit protein uL30 (24 aa).

It belongs to the universal ribosomal protein uL30 family. In terms of assembly, part of the 50S ribosomal subunit.

The sequence is that of Large ribosomal subunit protein uL30 (rpmD) from Ectopseudomonas mendocina (Pseudomonas mendocina).